The sequence spans 268 residues: Tryptophan synthase alpha chain (268 aa).

Catalysis depends on proton acceptor residues E49 and D60.

This sequence belongs to the TrpA family. Tetramer of two alpha and two beta chains.

The catalysed reaction is (1S,2R)-1-C-(indol-3-yl)glycerol 3-phosphate + L-serine = D-glyceraldehyde 3-phosphate + L-tryptophan + H2O. Its pathway is amino-acid biosynthesis; L-tryptophan biosynthesis; L-tryptophan from chorismate: step 5/5. Functionally, the alpha subunit is responsible for the aldol cleavage of indoleglycerol phosphate to indole and glyceraldehyde 3-phosphate. The sequence is that of Tryptophan synthase alpha chain from Escherichia coli O81 (strain ED1a).